The chain runs to 1742 residues: Kinase non-catalytic C-lobe domain-containing protein 1 (1742 aa).

Positions 37 to 217 (VSLADILSLR…QELSENTWRG (181 aa)) constitute a KIND 1 domain. Disordered regions lie at residues 215–288 (WRGR…EGLA) and 365–455 (FKTQ…TEQS). S267 is modified (phosphoserine). Over residues 403 to 412 (LEASSPSQGS) the composition is skewed to polar residues. A compositionally biased stretch (basic and acidic residues) spans 426 to 445 (DSDHEGHIPRSEEKIPEESR). Positions 456-620 (LSLKDLLSKL…RASTCKVHPE (165 aa)) constitute a KIND 2 domain. Disordered stretches follow at residues 703 to 727 (DQLA…REGT), 744 to 876 (SNQL…KMTA), 948 to 1006 (GPAS…LSDI), and 1028 to 1076 (VTRE…ASDF). Residues 711 to 727 (SNEKPKEGSGHLDREGT) show a composition bias toward basic and acidic residues. Residues 755-771 (GATPDPDGDSGSPSSAT) are compositionally biased toward low complexity. Residues 782 to 791 (VTQQKGTSGT) are compositionally biased toward polar residues. Residues 847–861 (SDGHPEKPRPADRKL) are compositionally biased toward basic and acidic residues. Over residues 949-965 (PASPSESTSEEPGSQPE) the composition is skewed to low complexity. Position 951 is a phosphoserine (S951). Positions 1043-1053 (GPSQDSTSHAS) are enriched in polar residues. A coiled-coil region spans residues 1112-1177 (HTELEAQSPE…EMKSKVQFLS (66 aa)). The 129-residue stretch at 1239–1367 (KARILQAGTP…ALLEVGTERR (129 aa)) folds into the N-terminal Ras-GEF domain. A Ras-GEF domain is found at 1461-1712 (STNQLFTQLT…SGADVSILAA (252 aa)).

In terms of assembly, interacts (via KIND2) with MAP2; the interaction enhances MAP2 phosphorylation and localizes KNDC1 to dendrites. Highly expressed in the brain and at low levels in the ovary. In the brain it is most prominently expressed in the cerebellum where it is restricted to the granular Purkinje cell layer.

Its subcellular location is the cell projection. It localises to the dendrite. The protein localises to the perikaryon. RAS-Guanine nucleotide exchange factor (GEF) that controls the negative regulation of neuronal dendrite growth by mediating a signaling pathway linking RAS and MAP2. May be involved in cellular senescence. In Mus musculus (Mouse), this protein is Kinase non-catalytic C-lobe domain-containing protein 1.